A 371-amino-acid polypeptide reads, in one-letter code: N-acetyldiaminopimelate deacetylase (371 aa).

Aspartate 68 is an active-site residue. Glutamate 127 serves as the catalytic Proton acceptor.

It belongs to the peptidase M20A family. N-acetyldiaminopimelate deacetylase subfamily.

It catalyses the reaction N-acetyl-(2S,6S)-2,6-diaminopimelate + H2O = (2S,6S)-2,6-diaminopimelate + acetate. It participates in amino-acid biosynthesis; L-lysine biosynthesis via DAP pathway; LL-2,6-diaminopimelate from (S)-tetrahydrodipicolinate (acetylase route): step 3/3. Catalyzes the conversion of N-acetyl-diaminopimelate to diaminopimelate and acetate. This is N-acetyldiaminopimelate deacetylase from Listeria innocua serovar 6a (strain ATCC BAA-680 / CLIP 11262).